Here is a 470-residue protein sequence, read N- to C-terminus: Cysteine--tRNA ligase (470 aa).

C28 serves as a coordination point for Zn(2+). Positions 30-40 (PTVYNYIHIGN) match the 'HIGH' region motif. 3 residues coordinate Zn(2+): C211, H236, and E240. Residues 270 to 274 (KMSKS) carry the 'KMSKS' region motif. K273 is a binding site for ATP.

It belongs to the class-I aminoacyl-tRNA synthetase family. As to quaternary structure, monomer. Zn(2+) is required as a cofactor.

Its subcellular location is the cytoplasm. The enzyme catalyses tRNA(Cys) + L-cysteine + ATP = L-cysteinyl-tRNA(Cys) + AMP + diphosphate. In Enterococcus faecalis (strain ATCC 700802 / V583), this protein is Cysteine--tRNA ligase.